Here is a 319-residue protein sequence, read N- to C-terminus: Malate dehydrogenase (319 aa).

NAD(+) is bound by residues 10-15 (GAGQIG) and aspartate 34. Arginine 85 and arginine 91 together coordinate substrate. NAD(+) contacts are provided by residues asparagine 98 and 121–123 (ITN). Positions 123 and 154 each coordinate substrate. Histidine 178 acts as the Proton acceptor in catalysis.

The protein belongs to the LDH/MDH superfamily. MDH type 3 family.

It carries out the reaction (S)-malate + NAD(+) = oxaloacetate + NADH + H(+). Functionally, catalyzes the reversible oxidation of malate to oxaloacetate. The polypeptide is Malate dehydrogenase (Rhodospirillum centenum (strain ATCC 51521 / SW)).